Consider the following 156-residue polypeptide: ATP synthase subunit b (156 aa).

Residues 7-29 (LLGQAISFALFVWFCMKYVWPPL) traverse the membrane as a helical segment.

It belongs to the ATPase B chain family. F-type ATPases have 2 components, F(1) - the catalytic core - and F(0) - the membrane proton channel. F(1) has five subunits: alpha(3), beta(3), gamma(1), delta(1), epsilon(1). F(0) has three main subunits: a(1), b(2) and c(10-14). The alpha and beta chains form an alternating ring which encloses part of the gamma chain. F(1) is attached to F(0) by a central stalk formed by the gamma and epsilon chains, while a peripheral stalk is formed by the delta and b chains.

The protein resides in the cell inner membrane. F(1)F(0) ATP synthase produces ATP from ADP in the presence of a proton or sodium gradient. F-type ATPases consist of two structural domains, F(1) containing the extramembraneous catalytic core and F(0) containing the membrane proton channel, linked together by a central stalk and a peripheral stalk. During catalysis, ATP synthesis in the catalytic domain of F(1) is coupled via a rotary mechanism of the central stalk subunits to proton translocation. In terms of biological role, component of the F(0) channel, it forms part of the peripheral stalk, linking F(1) to F(0). The protein is ATP synthase subunit b of Vibrio parahaemolyticus serotype O3:K6 (strain RIMD 2210633).